The sequence spans 220 residues: Putative pyrophosphatase PpaX (220 aa).

Asp-9 functions as the Nucleophile in the catalytic mechanism.

This sequence belongs to the HAD-like hydrolase superfamily. PpaX family. Mg(2+) is required as a cofactor.

The catalysed reaction is diphosphate + H2O = 2 phosphate + H(+). This chain is Putative pyrophosphatase PpaX, found in Caldanaerobacter subterraneus subsp. tengcongensis (strain DSM 15242 / JCM 11007 / NBRC 100824 / MB4) (Thermoanaerobacter tengcongensis).